Consider the following 469-residue polypeptide: Aspartyl/glutamyl-tRNA(Asn/Gln) amidotransferase subunit B (469 aa).

It belongs to the GatB/GatE family. GatB subfamily. As to quaternary structure, heterotrimer of A, B and C subunits.

It catalyses the reaction L-glutamyl-tRNA(Gln) + L-glutamine + ATP + H2O = L-glutaminyl-tRNA(Gln) + L-glutamate + ADP + phosphate + H(+). The catalysed reaction is L-aspartyl-tRNA(Asn) + L-glutamine + ATP + H2O = L-asparaginyl-tRNA(Asn) + L-glutamate + ADP + phosphate + 2 H(+). Its function is as follows. Allows the formation of correctly charged Asn-tRNA(Asn) or Gln-tRNA(Gln) through the transamidation of misacylated Asp-tRNA(Asn) or Glu-tRNA(Gln) in organisms which lack either or both of asparaginyl-tRNA or glutaminyl-tRNA synthetases. The reaction takes place in the presence of glutamine and ATP through an activated phospho-Asp-tRNA(Asn) or phospho-Glu-tRNA(Gln). In Methanococcus vannielii (strain ATCC 35089 / DSM 1224 / JCM 13029 / OCM 148 / SB), this protein is Aspartyl/glutamyl-tRNA(Asn/Gln) amidotransferase subunit B.